The chain runs to 906 residues: Cadherin-2 (906 aa).

The N-terminal stretch at 1–25 is a signal peptide; that stretch reads MCRIVGAPRTLLPLLAALLQASVEA. Residues 26–159 constitute a propeptide that is removed on maturation; the sequence is SGGIALCKTG…HNGHLQRQKR (134 aa). Phosphoserine is present on residues Ser-96 and Ser-135. 5 consecutive Cadherin domains span residues 160–267, 268–382, 383–497, 498–603, and 604–714; these read DWVI…RPEF, LHQV…PPEF, TAMS…NPYF, APNP…DNAP, and QVVP…DVDR. Over 160-724 the chain is Extracellular; the sequence is DWVIPPINLP…IVGAGLGTGA (565 aa). Ca(2+) is bound at residue Glu-170. The N-linked (GlcNAc...) asparagine glycan is linked to Asn-190. Residues Asp-226, Glu-228, Asp-259, Met-260, Asn-261, Asp-262, and Asn-263 each coordinate Ca(2+). N-linked (GlcNAc...) asparagine glycosylation is present at Asn-273. Residues Asp-293, Asp-295, and Asn-301 each coordinate Ca(2+). Asn-325 carries an N-linked (GlcNAc...) asparagine glycan. A Ca(2+)-binding site is contributed by Asp-353. N-linked (GlcNAc...) asparagine glycosylation is found at Asn-402, Asn-572, Asn-622, Asn-651, and Asn-692. Residues 725–745 form a helical membrane-spanning segment; it reads IIAILLCIIILLILVLMFVVW. Residues 746 to 906 are Cytoplasmic-facing; that stretch reads MKRRDKERQA…LADMYGGGDD (161 aa). Residues 863 to 880 show a composition bias toward low complexity; the sequence is SGSTAGSLSSLNSSSSGG. Residues 863-884 form a disordered region; it reads SGSTAGSLSSLNSSSSGGEQDY.

As to quaternary structure, homodimer (via extracellular region). Can also form heterodimers with other cadherins (via extracellular region). Dimerization occurs in trans, i.e. with a cadherin chain from another cell. Interacts with CDCP1. Interacts with PCDH8; this complex may also include TAOK2. The interaction with PCDH8 may lead to internalization through TAOK2/p38 MAPK pathway. Identified in a complex containing FGFR4, NCAM1, CDH2, PLCG1, FRS2, SRC, SHC1, GAP43 and CTTN. May interact with OBSCN (via protein kinase domain 2). Interacts with FBXO45. Post-translationally, cleaved by MMP24. Ectodomain cleavage leads to the generation of a soluble 90 kDa N-terminal soluble fragment and a 45 kDa membrane-bound C-terminal fragment 1 (CTF1), which is further cleaved by gamma-secretase into a 35 kDa. Cleavage in neural stem cells by MMP24 affects CDH2-mediated anchorage of neural stem cells to ependymocytes in the adult subependymal zone, leading to modulate neural stem cell quiescence. May be phosphorylated by OBSCN.

The protein localises to the cell membrane. The protein resides in the sarcolemma. It is found in the cell junction. It localises to the cell surface. Its subcellular location is the desmosome. The protein localises to the adherens junction. Its function is as follows. Calcium-dependent cell adhesion protein; preferentially mediates homotypic cell-cell adhesion by dimerization with a CDH2 chain from another cell. Cadherins may thus contribute to the sorting of heterogeneous cell types. Acts as a regulator of neural stem cells quiescence by mediating anchorage of neural stem cells to ependymocytes in the adult subependymal zone: upon cleavage by MMP24, CDH2-mediated anchorage is affected, leading to modulate neural stem cell quiescence. Plays a role in cell-to-cell junction formation between pancreatic beta cells and neural crest stem (NCS) cells, promoting the formation of processes by NCS cells. CDH2 may be involved in neuronal recognition mechanism. In hippocampal neurons, may regulate dendritic spine density. This Rhinolophus ferrumequinum (Greater horseshoe bat) protein is Cadherin-2 (CDH2).